Here is a 395-residue protein sequence, read N- to C-terminus: Probable eukaryotic translation initiation factor 5 (395 aa).

28–35 (GKGNGIKT) provides a ligand contact to GTP. 2 disordered regions span residues 146-171 (PPAK…AEDE) and 374-395 (LAEA…DDDE). Over residues 147–157 (PAKKKSHKHKR) the composition is skewed to basic residues. Acidic residues-rich tracts occupy residues 161–170 (VAEEEDGAED) and 377–395 (ASDE…DDDE). Positions 228-384 (EEAESSRYDQ…AEASDESESE (157 aa)) constitute a W2 domain.

It belongs to the eIF-2-beta/eIF-5 family. In terms of assembly, monomer.

Its function is as follows. Catalyzes the hydrolysis of GTP bound to the 40S ribosomal initiation complex (40S.mRNA.Met-tRNA[F].eIF-2.GTP) with the subsequent joining of a 60S ribosomal subunit resulting in the release of eIF-2 and the guanine nucleotide. The subsequent joining of a 60S ribosomal subunit results in the formation of a functional 80S initiation complex (80S.mRNA.Met-tRNA[F]). The polypeptide is Probable eukaryotic translation initiation factor 5 (tif5) (Schizosaccharomyces pombe (strain 972 / ATCC 24843) (Fission yeast)).